The following is a 270-amino-acid chain: tRNA pseudouridine synthase A (270 aa).

Aspartate 51 serves as the catalytic Nucleophile. Tyrosine 109 lines the substrate pocket.

Belongs to the tRNA pseudouridine synthase TruA family. In terms of assembly, homodimer.

It carries out the reaction uridine(38/39/40) in tRNA = pseudouridine(38/39/40) in tRNA. Its function is as follows. Formation of pseudouridine at positions 38, 39 and 40 in the anticodon stem and loop of transfer RNAs. The sequence is that of tRNA pseudouridine synthase A from Burkholderia multivorans (strain ATCC 17616 / 249).